A 405-amino-acid polypeptide reads, in one-letter code: Probable tRNA sulfurtransferase (405 aa).

The THUMP domain maps to 60-165; sequence QEVSASLKKI…PDAAYISHEE (106 aa). ATP is bound by residues 183-184, 208-209, Arg-265, Gly-287, and Gln-296; these read ML and HF.

Belongs to the ThiI family.

It localises to the cytoplasm. The catalysed reaction is [ThiI sulfur-carrier protein]-S-sulfanyl-L-cysteine + a uridine in tRNA + 2 reduced [2Fe-2S]-[ferredoxin] + ATP + H(+) = [ThiI sulfur-carrier protein]-L-cysteine + a 4-thiouridine in tRNA + 2 oxidized [2Fe-2S]-[ferredoxin] + AMP + diphosphate. The enzyme catalyses [ThiS sulfur-carrier protein]-C-terminal Gly-Gly-AMP + S-sulfanyl-L-cysteinyl-[cysteine desulfurase] + AH2 = [ThiS sulfur-carrier protein]-C-terminal-Gly-aminoethanethioate + L-cysteinyl-[cysteine desulfurase] + A + AMP + 2 H(+). Its pathway is cofactor biosynthesis; thiamine diphosphate biosynthesis. Its function is as follows. Catalyzes the ATP-dependent transfer of a sulfur to tRNA to produce 4-thiouridine in position 8 of tRNAs, which functions as a near-UV photosensor. Also catalyzes the transfer of sulfur to the sulfur carrier protein ThiS, forming ThiS-thiocarboxylate. This is a step in the synthesis of thiazole, in the thiamine biosynthesis pathway. The sulfur is donated as persulfide by IscS. The protein is Probable tRNA sulfurtransferase of Streptococcus suis (strain 98HAH33).